A 396-amino-acid chain; its full sequence is Bifunctional enzyme Fae/Hps (396 aa).

The tract at residues 1–161 is formaldehyde-activating enzyme; that stretch reads MMLIGEALIG…HEKDRAAHAV (161 aa). The Proton donor role is filled by His17. Residues Asp19, Leu48, Lys66, Thr68, and Gln83 each coordinate substrate. Residues 162-396 form a 3-hexulose-6-phosphate synthase region; sequence MGFKISKLWD…IDQFRIMTDF (235 aa).

This sequence in the N-terminal section; belongs to the formaldehyde-activating enzyme family. The protein in the C-terminal section; belongs to the HPS/KGPDC family. HPS subfamily.

The enzyme catalyses 5,6,7,8-tetrahydromethanopterin + formaldehyde = 5,10-methylenetetrahydromethanopterin + H2O. It carries out the reaction D-ribulose 5-phosphate + formaldehyde = D-arabino-hex-3-ulose 6-phosphate. It functions in the pathway carbohydrate biosynthesis; D-ribose 5-phosphate biosynthesis. Its function is as follows. Catalyzes the condensation of formaldehyde with tetrahydromethanopterin (H(4)MPT) to 5,10-methylenetetrahydromethanopterin. Catalyzes the reversible formation of ribulose-5-phosphate and formaldehyde from 3-hexulose-6-phosphate. This chain is Bifunctional enzyme Fae/Hps, found in Methanococcoides burtonii (strain DSM 6242 / NBRC 107633 / OCM 468 / ACE-M).